We begin with the raw amino-acid sequence, 428 residues long: Probable mannosyltransferase YUR1 (428 aa).

The Cytoplasmic portion of the chain corresponds to 1-3 (MAK). Residues 4-24 (GGSLYIVGIFLPIWTFMIYIF) form a helical; Signal-anchor for type II membrane protein membrane-spanning segment. Positions 25-88 (GKELFLIRKY…TRQNDSDSFH (64 aa)) are stem region. At 25–428 (GKELFLIRKY…YFLKEEQDEI (404 aa)) the chain is on the lumenal side. N-linked (GlcNAc...) asparagine glycosylation is found at N77, N82, N92, and N167. Residues 89-428 (LRENATILML…YFLKEEQDEI (340 aa)) form a catalytic region. E313 functions as the Nucleophile in the catalytic mechanism. N414 is a glycosylation site (N-linked (GlcNAc...) asparagine).

Belongs to the glycosyltransferase 15 family.

It localises to the golgi apparatus membrane. Its pathway is protein modification; protein glycosylation. Functionally, possible glycosyltransferase involved in N-linked glycosylation. Transfers an alpha-D-mannosyl residue from GDP-mannose into lipid-linked oligosaccharide, forming an alpha-(1-&gt;2)-D-mannosyl-D-mannose linkage. The polypeptide is Probable mannosyltransferase YUR1 (YUR1) (Saccharomyces cerevisiae (strain ATCC 204508 / S288c) (Baker's yeast)).